We begin with the raw amino-acid sequence, 519 residues long: Glutamate--cysteine ligase (519 aa).

Belongs to the glutamate--cysteine ligase type 1 family. Type 1 subfamily.

The enzyme catalyses L-cysteine + L-glutamate + ATP = gamma-L-glutamyl-L-cysteine + ADP + phosphate + H(+). It functions in the pathway sulfur metabolism; glutathione biosynthesis; glutathione from L-cysteine and L-glutamate: step 1/2. The sequence is that of Glutamate--cysteine ligase from Photorhabdus laumondii subsp. laumondii (strain DSM 15139 / CIP 105565 / TT01) (Photorhabdus luminescens subsp. laumondii).